Reading from the N-terminus, the 545-residue chain is Esterase-5C (545 aa).

A signal peptide spans 1–19 (MLAARLIILLSFYWLSASA). The cysteines at positions 84 and 103 are disulfide-linked. Asn-113 is a glycosylation site (N-linked (GlcNAc...) asparagine). The Acyl-ester intermediate role is filled by Ser-207. Cys-259 and Cys-271 are joined by a disulfide. Asn-421 carries an N-linked (GlcNAc...) asparagine glycan. Residue His-467 is the Charge relay system of the active site. Asn-507 is a glycosylation site (N-linked (GlcNAc...) asparagine). Cys-515 and Cys-536 are disulfide-bonded.

This sequence belongs to the type-B carboxylesterase/lipase family.

The protein localises to the secreted. It carries out the reaction a carboxylic ester + H2O = an alcohol + a carboxylate + H(+). The protein is Esterase-5C (Est-5C) of Drosophila persimilis (Fruit fly).